A 149-amino-acid polypeptide reads, in one-letter code: Nucleoside diphosphate kinase (149 aa).

Lysine 9, phenylalanine 57, arginine 85, threonine 91, arginine 102, and asparagine 112 together coordinate ATP. Histidine 115 (pros-phosphohistidine intermediate) is an active-site residue.

This sequence belongs to the NDK family. As to quaternary structure, homotetramer. Mg(2+) is required as a cofactor.

Its subcellular location is the cytoplasm. The enzyme catalyses a 2'-deoxyribonucleoside 5'-diphosphate + ATP = a 2'-deoxyribonucleoside 5'-triphosphate + ADP. The catalysed reaction is a ribonucleoside 5'-diphosphate + ATP = a ribonucleoside 5'-triphosphate + ADP. Functionally, major role in the synthesis of nucleoside triphosphates other than ATP. The ATP gamma phosphate is transferred to the NDP beta phosphate via a ping-pong mechanism, using a phosphorylated active-site intermediate. The chain is Nucleoside diphosphate kinase from Thermomicrobium roseum (strain ATCC 27502 / DSM 5159 / P-2).